A 443-amino-acid polypeptide reads, in one-letter code: Carbohydrate sulfotransferase 9 (443 aa).

Topologically, residues 1–12 (MQPSEMVMNPKQ) are cytoplasmic. A helical; Signal-anchor for type II membrane protein membrane pass occupies residues 13-33 (VFLSVLIFGVAGLLLFMYLQV). The Lumenal portion of the chain corresponds to 34-443 (WIEEQHTGRV…LMFNYTTPFL (410 aa)). The span at 108–128 (LTKTSHSQGGDQALSKSTGSP) shows a compositional bias: polar residues. The tract at residues 108–132 (LTKTSHSQGGDQALSKSTGSPTEKL) is disordered. A glycan (N-linked (GlcNAc...) asparagine) is linked at Asn-159. 220–226 (PKAGCSN) lines the 3'-phosphoadenylyl sulfate pocket. Asn-243 is a glycosylation site (N-linked (GlcNAc...) asparagine). 280 to 288 (RDPMERLVS) lines the 3'-phosphoadenylyl sulfate pocket. Asn-324 and Asn-437 each carry an N-linked (GlcNAc...) asparagine glycan.

Belongs to the sulfotransferase 2 family. In terms of tissue distribution, highly expressed in trachea. Also expressed in fetal lung, adult pancreas, testis and salivary gland. Expressed at low level in pituitary gland, apex of the heart, adult lung, prostate and mammary gland. Weakly or not expressed in heart, liver and spinal cord.

It is found in the golgi apparatus membrane. Its subcellular location is the secreted. Catalyzes the transfer of sulfate to position 4 of non-reducing N-acetylgalactosamine (GalNAc) residues in both N-glycans and O-glycans. Participates in biosynthesis of glycoprotein hormones lutropin and thyrotropin, by mediating sulfation of their carbohydrate structures. Has a higher activity toward carbonic anhydrase VI than toward lutropin. Only active against terminal GalNAcbeta1,GalNAcbeta. Isoform 2, but not isoform 1, is active toward chondroitin. The sequence is that of Carbohydrate sulfotransferase 9 (CHST9) from Homo sapiens (Human).